The chain runs to 578 residues: Arginine--tRNA ligase (578 aa).

The 'HIGH' region signature appears at 125–135 (PNVAKKMHVGH).

Belongs to the class-I aminoacyl-tRNA synthetase family. Monomer.

The protein localises to the cytoplasm. The catalysed reaction is tRNA(Arg) + L-arginine + ATP = L-arginyl-tRNA(Arg) + AMP + diphosphate. In Buchnera aphidicola subsp. Baizongia pistaciae (strain Bp), this protein is Arginine--tRNA ligase.